The primary structure comprises 458 residues: Ammonium transporter Rh type B (458 aa).

At 1-13 (MAGSPSRAAGRRL) the chain is on the cytoplasmic side. The chain crosses the membrane as a helical span at residues 14–34 (QLPLLCLFLQGATAVLFAVFV). Topologically, residues 35-61 (RYNHKTDAALWHRGNYSNADNEFYFRY) are extracellular. N-linked (GlcNAc...) asparagine glycosylation occurs at N49. Residues 62 to 82 (PSFQDVHAMVFVGFGFLMVFL) form a helical membrane-spanning segment. Topologically, residues 83-86 (QRYG) are cytoplasmic. The chain crosses the membrane as a helical span at residues 87–107 (FSSVGFTFLLAAFALQWSTLV). The Extracellular portion of the chain corresponds to 108–124 (QGFLHSFHSGHIHVGVE). Residues 125-145 (SMINADFCAGAVLISFGAVLG) form a helical membrane-spanning segment. Residues 146-149 (KTGP) lie on the Cytoplasmic side of the membrane. A helical transmembrane segment spans residues 150–170 (AQLLLMALLEVVLFGINEFVL). Over 171–178 (LHLLGVRD) the chain is Extracellular. A helical membrane pass occupies residues 179–201 (AGGSMTIHTFGAYFGLVLSRVLY). The Cytoplasmic portion of the chain corresponds to 202–219 (RPQLEKSKHRQGSVYHSD). The chain crosses the membrane as a helical span at residues 220 to 240 (LFAMIGTIFLWIFWPSFNSAL). The Extracellular portion of the chain corresponds to 241 to 251 (TALGAGQHRTA). A helical transmembrane segment spans residues 252-272 (LNTYYSLAASTLGTFALSALV). Over 273–282 (GEDGRLDMVH) the chain is Cytoplasmic. The helical transmembrane segment at 283–303 (IQNAALAGGVVVGTSSEMMLT) threads the bilayer. Position 304 (P304) is a topological domain, extracellular. The chain crosses the membrane as a helical span at residues 305–325 (FGALAAGFLAGTVSTLGYKFF). Topologically, residues 326-346 (TPILESKFKVQDTCGVHNLHG) are cytoplasmic. Residues 347-367 (MPGVLGALLGVLVAGLATHEA) form a helical membrane-spanning segment. Residues 368-393 (YGDGLESVFPLIAEGQRSATSQAMLQ) are Extracellular-facing. A helical membrane pass occupies residues 394–414 (LFGLFVTLMFASVGGGLGGLL). The Cytoplasmic segment spans residues 415 to 458 (LKLPFLDSPPDSQCYEDQVHWQVPGEHEDEAQRPLRVEEADTQA). Residues 416–424 (KLPFLDSPP) are interaction with ANK3. The short motif at 429-432 (YEDQ) is the Basolateral sorting signal element. Positions 439-458 (GEHEDEAQRPLRVEEADTQA) are disordered. Residues 444 to 458 (EAQRPLRVEEADTQA) show a composition bias toward basic and acidic residues.

This sequence belongs to the ammonium transporter (TC 2.A.49) family. Rh subfamily. Interacts (via C-terminus) with ANK2 and ANK3; required for targeting to the basolateral membrane. N-glycosylated.

It is found in the cell membrane. Its subcellular location is the basolateral cell membrane. The catalysed reaction is NH4(+)(in) = NH4(+)(out). It catalyses the reaction methylamine(out) = methylamine(in). It carries out the reaction CO2(out) = CO2(in). In terms of biological role, ammonium transporter involved in the maintenance of acid-base homeostasis. Transports ammonium and its related derivative methylammonium across the basolateral plasma membrane of epithelial cells likely contributing to renal transepithelial ammonia transport and ammonia metabolism. May transport either NH4(+) or NH3 ammonia species predominantly mediating an electrogenic NH4(+) transport. May act as a CO2 channel providing for renal acid secretion. In Papio hamadryas (Hamadryas baboon), this protein is Ammonium transporter Rh type B (RHBG).